We begin with the raw amino-acid sequence, 76 residues long: Horsegram inhibitor 1 (76 aa).

Disulfide bonds link C16/C70, C17/C32, C20/C66, C22/C30, C40/C47, C44/C59, and C49/C57.

Belongs to the Bowman-Birk serine protease inhibitor family. HGI-III exists in a state of equilibrium between monomer, homodimer and trimer, with homodimer being the predominant form. The homodimer is stabilized by the non-covalent interaction between Lys-24 of one subunit and Asp-76 of the other subunit. The homodimer is more thermostable than the monomer. HGGI-I, HGGI-II and HGGI-III exist as monomers. HGGI-I, HGGI-II and HGGI-III are produced by proteolysis of the N- and C-termini of HGI-III.

Functionally, inhibitors of trypsin and chymotrypsin. HGGI-III has a higher activity than HGGI-I or HGGI-II. This Vigna unguiculata subsp. cylindrica (Horse gram) protein is Horsegram inhibitor 1.